Reading from the N-terminus, the 205-residue chain is Small ribosomal subunit protein uS4 (205 aa).

Residues 1–16 are compositionally biased toward basic and acidic residues; that stretch reads MSKRESSKYKIDRRMG. Residues 1-46 form a disordered region; sequence MSKRESSKYKIDRRMGENIWGRPKSPVNRREYGPGQHGQRRKSKLS. Residues 94 to 157 enclose the S4 RNA-binding domain; that stretch reads SRLDAIVYRA…KQLVSVLESV (64 aa).

It belongs to the universal ribosomal protein uS4 family. As to quaternary structure, part of the 30S ribosomal subunit. Contacts protein S5. The interaction surface between S4 and S5 is involved in control of translational fidelity.

Its function is as follows. One of the primary rRNA binding proteins, it binds directly to 16S rRNA where it nucleates assembly of the body of the 30S subunit. Functionally, with S5 and S12 plays an important role in translational accuracy. The sequence is that of Small ribosomal subunit protein uS4 from Sinorhizobium fredii (strain NBRC 101917 / NGR234).